Consider the following 412-residue polypeptide: MLCLVYNSILCKQRRISLKVLQQFRCWNISKTFLSYRTLTALAIETSCDDTSVSVVRTSDSSSHCQNEIICLNTHRTISKYEAYGGIHPTIVIHEHQKNLAKVIQRTISDAARSGITDFDLIAVTRGPGMIGPLAVGLNTAKGLAVGLQKPLLAVHHMQAHALAVQLEKSIDFPYLNILVSGGHTMLVYSNSLLNHEIIVTTSDIAVGDYLDKCAKYLGIPWDNEMPAAALEQFASPEINSTSYSLKPPIPLNTREKVHSASFSFSGLESYACRIIRKTPLNLSEKKFFAYQLQYAAFQHICQKTLLALKRLDLSKVKYLVCSGGVARNELLKKMLNDTLMVLQFEHQPTDIKLVYPSPDICSDNAAMIGYTAIQMFKAGYTSSFDVEPIRKWPINQILTVEGWLTKKNKKV.

The N-terminal 78 residues, 1–78, are a transit peptide targeting the mitochondrion; sequence MLCLVYNSIL…IICLNTHRTI (78 aa). A divalent metal cation contacts are provided by His-157 and His-161. Residues 179–183, Asp-212, Ala-228, Glu-232, 328–329, and Ser-363 each bind substrate; these read LVSGG and RN. Residue Asp-364 participates in a divalent metal cation binding.

This sequence belongs to the KAE1 / TsaD family. Homodimer. The cofactor is a divalent metal cation.

It localises to the mitochondrion. The catalysed reaction is L-threonylcarbamoyladenylate + adenosine(37) in tRNA = N(6)-L-threonylcarbamoyladenosine(37) in tRNA + AMP + H(+). Functionally, required for the formation of a threonylcarbamoyl group on adenosine at position 37 (t(6)A37) in mitochondrial tRNAs that read codons beginning with adenine. Probably involved in the transfer of the threonylcarbamoyl moiety of threonylcarbamoyl-AMP (TC-AMP) to the N6 group of A37. Involved in mitochondrial genome maintenance. The protein is tRNA N6-adenosine threonylcarbamoyltransferase, mitochondrial (pgp1) of Schizosaccharomyces pombe (strain 972 / ATCC 24843) (Fission yeast).